The sequence spans 284 residues: 4-diphosphocytidyl-2-C-methyl-D-erythritol kinase (284 aa).

Lys17 is an active-site residue. ATP is bound at residue 100-110; it reads PMGGGLGGGSS. Residue Asp142 is part of the active site.

It belongs to the GHMP kinase family. IspE subfamily.

It carries out the reaction 4-CDP-2-C-methyl-D-erythritol + ATP = 4-CDP-2-C-methyl-D-erythritol 2-phosphate + ADP + H(+). The protein operates within isoprenoid biosynthesis; isopentenyl diphosphate biosynthesis via DXP pathway; isopentenyl diphosphate from 1-deoxy-D-xylulose 5-phosphate: step 3/6. In terms of biological role, catalyzes the phosphorylation of the position 2 hydroxy group of 4-diphosphocytidyl-2C-methyl-D-erythritol. This chain is 4-diphosphocytidyl-2-C-methyl-D-erythritol kinase, found in Aromatoleum aromaticum (strain DSM 19018 / LMG 30748 / EbN1) (Azoarcus sp. (strain EbN1)).